Consider the following 132-residue polypeptide: Small ribosomal subunit protein uS8 (132 aa).

The protein belongs to the universal ribosomal protein uS8 family. Part of the 30S ribosomal subunit. Contacts proteins S5 and S12.

Its function is as follows. One of the primary rRNA binding proteins, it binds directly to 16S rRNA central domain where it helps coordinate assembly of the platform of the 30S subunit. This is Small ribosomal subunit protein uS8 from Bacillus licheniformis (strain ATCC 14580 / DSM 13 / JCM 2505 / CCUG 7422 / NBRC 12200 / NCIMB 9375 / NCTC 10341 / NRRL NRS-1264 / Gibson 46).